We begin with the raw amino-acid sequence, 98 residues long: Large ribosomal subunit protein bL21 (98 aa).

The protein belongs to the bacterial ribosomal protein bL21 family. As to quaternary structure, part of the 50S ribosomal subunit. Contacts protein L20.

Functionally, this protein binds to 23S rRNA in the presence of protein L20. This chain is Large ribosomal subunit protein bL21, found in Chloroherpeton thalassium (strain ATCC 35110 / GB-78).